A 255-amino-acid chain; its full sequence is Proliferating cell nuclear antigen 2 (255 aa).

Residues 61 to 80 (HCDRNVSLGLDLKSLGKVLK) mediate DNA binding.

It belongs to the PCNA family. In terms of assembly, homotrimer. Interacts with the catalytic subunits of two DNA polymerase complexes: PolD1 in the delta complex and PolE1/DNApol-epsilon255 in the epsilon complex.

It is found in the nucleus. Its subcellular location is the chromosome. The protein localises to the cytoplasm. Its function is as follows. Likely to be an auxiliary protein of DNA polymerase delta complex and is probably involved in the control of DNA replication and repair by increasing the polymerase's processibility. May function independently of PCNA during DNA repair. In Drosophila melanogaster (Fruit fly), this protein is Proliferating cell nuclear antigen 2.